The primary structure comprises 2223 residues: Protein CHROMATIN REMODELING 4 (2223 aa).

A disordered region spans residues 39–69 (FDSPEYTSSSKPSKQRLKTDSTPERNSSKRK). A compositionally biased stretch (basic and acidic residues) spans 55–69 (LKTDSTPERNSSKRK). The PHD-type zinc-finger motif lies at 75–122 (YFECVICDLGGDLLCCDSCPRTYHTACLNPPLKRIPNGKWICPKCSPN). 4 stretches are compositionally biased toward basic and acidic residues: residues 173–187 (EKGK…KSTG), 207–223 (SADD…DDLG), 248–285 (ESKL…ETGK), and 294–305 (ELNDGESLERCK). 3 disordered regions span residues 173-235 (EKGK…LPSD), 248-381 (ESKL…CLED), and 441-474 (AEDR…GTEG). The span at 306-315 (TDKKRAKKSL) shows a compositional bias: basic residues. Over residues 353-368 (ETPEKVKKLPKEERRA) the composition is skewed to basic and acidic residues. Residues 372–381 (TNKSSSCLED) show a composition bias toward polar residues. Residues 441 to 466 (AEDRIDSSSETGKSSRDSRLRDKDMD) are compositionally biased toward basic and acidic residues. Chromo domains are found at residues 531-587 (EEIE…YKAK) and 601-663 (KQPQ…ERNS). The 178-residue stretch at 701–878 (RRCWHKSKNV…YNLLNFLQPS (178 aa)) folds into the Helicase ATP-binding domain. Residue 714 to 721 (DEMGLGKT) coordinates ATP. Positions 829–832 (DEGH) match the DEAH box motif. The Nuclear localization signal motif lies at 902–909 (LKKLVAPH). The Helicase C-terminal domain maps to 1008–1167 (LLHSMLKVLH…GSQKEFEDIL (160 aa)). Disordered regions lie at residues 1268–1300 (EETA…DDVV), 1341–1380 (EAYA…LKEK), 1394–1463 (RRNS…ECLP), 1483–1511 (SESS…FNLP), 1760–1779 (LSSL…SSLF), and 2006–2223 (IPPF…LSDD). Residues 1363 to 1380 (EPELKKEYTPAGRALKEK) are compositionally biased toward basic and acidic residues. A coiled-coil region spans residues 1375 to 1402 (RALKEKFTKLRERQKNLIARRNSVEESL). Residues 1403–1414 (PSGNVDQVTEVA) show a composition bias toward polar residues. The segment covering 2009 to 2019 (FVIPEPPPPAP) has biased composition (pro residues). Residues 2025-2035 (SLRKKRKRKLH) show a composition bias toward basic residues. 3 stretches are compositionally biased toward polar residues: residues 2039–2061 (QKTT…GNPQ), 2075–2096 (GETS…TEPL), and 2128–2148 (TGTT…TINQ). Over residues 2157 to 2171 (DEKVESERTPLHSDE) the composition is skewed to basic and acidic residues. The stretch at 2189–2215 (IEAESQNTNAEEEAEAQEEDEESMKMV) forms a coiled coil. The span at 2198-2210 (AEEEAEAQEEDEE) shows a compositional bias: acidic residues.

This sequence belongs to the SNF2/RAD54 helicase family.

It localises to the nucleus. In terms of biological role, chromatin-remodeling protein that binds DNA through histones and regulates gene transcription. May specifically recognize and bind trimethylated 'Lys-27' (H3K27me3) and non-methylated 'Lys-4' of histone H3. Probable chromatin remodeling factor. This is Protein CHROMATIN REMODELING 4 from Arabidopsis thaliana (Mouse-ear cress).